Here is a 446-residue protein sequence, read N- to C-terminus: Exodeoxyribonuclease 7 large subunit (446 aa).

This sequence belongs to the XseA family. Heterooligomer composed of large and small subunits.

It is found in the cytoplasm. The enzyme catalyses Exonucleolytic cleavage in either 5'- to 3'- or 3'- to 5'-direction to yield nucleoside 5'-phosphates.. In terms of biological role, bidirectionally degrades single-stranded DNA into large acid-insoluble oligonucleotides, which are then degraded further into small acid-soluble oligonucleotides. This chain is Exodeoxyribonuclease 7 large subunit, found in Streptococcus thermophilus (strain CNRZ 1066).